We begin with the raw amino-acid sequence, 346 residues long: Phosphoribosylformylglycinamidine cyclo-ligase (346 aa).

The protein belongs to the AIR synthase family.

Its subcellular location is the cytoplasm. It catalyses the reaction 2-formamido-N(1)-(5-O-phospho-beta-D-ribosyl)acetamidine + ATP = 5-amino-1-(5-phospho-beta-D-ribosyl)imidazole + ADP + phosphate + H(+). The protein operates within purine metabolism; IMP biosynthesis via de novo pathway; 5-amino-1-(5-phospho-D-ribosyl)imidazole from N(2)-formyl-N(1)-(5-phospho-D-ribosyl)glycinamide: step 2/2. This chain is Phosphoribosylformylglycinamidine cyclo-ligase, found in Bacillus cereus (strain B4264).